The primary structure comprises 1069 residues: Degenerin-like protein del-10 (1069 aa).

At 1–95 (MVRMAERLAE…LNAASPVTRG (95 aa)) the chain is on the cytoplasmic side. The chain crosses the membrane as a helical span at residues 96–116 (LWCMIIIAFVILVLVQCYSQI). Residues 117 to 830 (KLYISEPVAT…FWSLACDIGG (714 aa)) are Extracellular-facing. N-linked (GlcNAc...) asparagine glycans are attached at residues asparagine 216, asparagine 290, asparagine 374, asparagine 454, asparagine 539, asparagine 545, and asparagine 584. A helical membrane pass occupies residues 831-851 (ALGLFLGASLLTIIEIVYLCI). Topologically, residues 852-1069 (QYGLCGKRAR…EEDDDKHSYV (218 aa)) are cytoplasmic. 2 disordered regions span residues 898 to 948 (KKSQ…TLTP) and 960 to 1069 (RNSQ…HSYV). Residues 915 to 928 (GDKFRSRASSEESK) are compositionally biased toward basic and acidic residues. A compositionally biased stretch (polar residues) spans 938 to 948 (NDPSGNSTLTP). Over residues 967 to 978 (YHDDHHPEDHYY) the composition is skewed to basic and acidic residues.

Belongs to the amiloride-sensitive sodium channel (TC 1.A.6) family.

It localises to the membrane. This is Degenerin-like protein del-10 from Caenorhabditis elegans.